The primary structure comprises 305 residues: Sulfate adenylyltransferase subunit 2 (305 aa).

The protein belongs to the PAPS reductase family. CysD subfamily. Heterodimer composed of CysD, the smaller subunit, and CysN.

The catalysed reaction is sulfate + ATP + H(+) = adenosine 5'-phosphosulfate + diphosphate. The protein operates within sulfur metabolism; hydrogen sulfide biosynthesis; sulfite from sulfate: step 1/3. With CysN forms the ATP sulfurylase (ATPS) that catalyzes the adenylation of sulfate producing adenosine 5'-phosphosulfate (APS) and diphosphate, the first enzymatic step in sulfur assimilation pathway. APS synthesis involves the formation of a high-energy phosphoric-sulfuric acid anhydride bond driven by GTP hydrolysis by CysN coupled to ATP hydrolysis by CysD. This is Sulfate adenylyltransferase subunit 2 from Pseudomonas fluorescens (strain SBW25).